The sequence spans 260 residues: MNRGDIFAKEFDTDPDVSTDSNYNNNNNSNNNNSIISNSNNNNNNNNNNVDDTDIEKHLYKVLLIGDYAVGKSSIIKRYCTGIFSPNYKLTIGVDFSVKDIEWEKNKIVSLQLWDIAGHERFGTMTRVYYRYAIAAIIVFDLSRPSTFDAVTKWREDVNSKVVLANQEPIPVLLLANKSDLSTSYVDSEMLDRFCKENNFIGWFATSASNDTNINEAMHFLTKEILEVAKTNHPPKPEEDTLELTKTNGEKSDDSKSCCK.

The tract at residues 11–50 (FDTDPDVSTDSNYNNNNNSNNNNSIISNSNNNNNNNNNNV) is disordered. The segment covering 21–49 (SNYNNNNNSNNNNSIISNSNNNNNNNNNN) has biased composition (low complexity). Residue 66–73 (GDYAVGKS) participates in GTP binding. Residues 88–96 (YKLTIGVDF) carry the Effector region motif. GTP-binding positions include 115 to 119 (DIAGH) and 177 to 180 (NKSD). Positions 231 to 260 (TNHPPKPEEDTLELTKTNGEKSDDSKSCCK) are disordered. Basic and acidic residues predominate over residues 248–260 (NGEKSDDSKSCCK). 2 S-geranylgeranyl cysteine lipidation sites follow: C258 and C259.

Belongs to the small GTPase superfamily. Rab family.

The protein is Ras-related protein Rab-32B (rab32B) of Dictyostelium discoideum (Social amoeba).